A 200-amino-acid chain; its full sequence is 3-isopropylmalate dehydratase small subunit (200 aa).

This sequence belongs to the LeuD family. LeuD type 1 subfamily. As to quaternary structure, heterodimer of LeuC and LeuD.

It catalyses the reaction (2R,3S)-3-isopropylmalate = (2S)-2-isopropylmalate. The protein operates within amino-acid biosynthesis; L-leucine biosynthesis; L-leucine from 3-methyl-2-oxobutanoate: step 2/4. Catalyzes the isomerization between 2-isopropylmalate and 3-isopropylmalate, via the formation of 2-isopropylmaleate. This is 3-isopropylmalate dehydratase small subunit from Haemophilus influenzae (strain 86-028NP).